A 119-amino-acid chain; its full sequence is Large ribosomal subunit protein bL20 (119 aa).

The protein belongs to the bacterial ribosomal protein bL20 family.

Its function is as follows. Binds directly to 23S ribosomal RNA and is necessary for the in vitro assembly process of the 50S ribosomal subunit. It is not involved in the protein synthesizing functions of that subunit. The polypeptide is Large ribosomal subunit protein bL20 (Herminiimonas arsenicoxydans).